The sequence spans 332 residues: MSSLTLSRRPRRNRKTAAIRDLLAETHLSPKDLIAPFFVKYGNNIKEEIPSLPGVFRWSLDLLLKEIERLCTYGLRAVMLFPIIPDDLKDAYGSYSSNPKNILCHSIHEIKNAFPHLCLISDIALDPYTTHGHDGIFLNGEVLNDESVRIFGNIATLHAEMGADIVAPSDMMDGRIGYIRSKLDQSGYSKTSIMSYSVKYASCLYSPFRDALSSHVTSGDKKQYQMNPKNVLEALLESSLDEEEGADILMVKPAGLYLDVIYRIRQNTCLPLAAYQVSGEYAMILSAFQQGWLDKETLFHESLIAIKRAGADMIISYSAPFILELLHQGFEF.

Residue lysine 199 is the Schiff-base intermediate with substrate of the active site. 5-aminolevulinate contacts are provided by arginine 209 and lysine 221. Glutamate 237 contacts Mg(2+). Lysine 252 serves as the catalytic Schiff-base intermediate with substrate. The 5-aminolevulinate site is built by serine 278 and tyrosine 317.

This sequence belongs to the ALAD family. As to quaternary structure, homooctamer.

It carries out the reaction 2 5-aminolevulinate = porphobilinogen + 2 H2O + H(+). It functions in the pathway porphyrin-containing compound metabolism; protoporphyrin-IX biosynthesis; coproporphyrinogen-III from 5-aminolevulinate: step 1/4. Its function is as follows. Catalyzes an early step in the biosynthesis of tetrapyrroles. Binds two molecules of 5-aminolevulinate per subunit, each at a distinct site, and catalyzes their condensation to form porphobilinogen. The sequence is that of Delta-aminolevulinic acid dehydratase (hemB) from Chlamydia pneumoniae (Chlamydophila pneumoniae).